A 68-amino-acid chain; its full sequence is Small ribosomal subunit protein bS21 (68 aa).

The protein belongs to the bacterial ribosomal protein bS21 family.

The protein is Small ribosomal subunit protein bS21 of Cereibacter sphaeroides (strain ATCC 17029 / ATH 2.4.9) (Rhodobacter sphaeroides).